A 234-amino-acid chain; its full sequence is uncharacterized protein (234 aa).

Positions 199-234 are disordered; the sequence is DNQNEPLENYSDDNNFSNFDETEHVDDSEMNDDNFI.

This is an uncharacterized protein from Buchnera aphidicola subsp. Schizaphis graminum (strain Sg).